The sequence spans 442 residues: Elongation factor 1-gamma (442 aa).

The region spanning 2–87 is the GST N-terminal domain; that stretch reads AAGTLYTYPE…YLSNDVLRGS (86 aa). One can recognise a GST C-terminal domain in the interval 88–216; it reads TPQASAQVLQ…VKLCEKMAQF (129 aa). 2 stretches are compositionally biased toward basic and acidic residues: residues 227–242 and 249–263; these read KKEA…KEGG and QEKK…KAAP. Residues 227-273 are disordered; it reads KKEAPIKKEKGGKEGGKQQPQQQEKKEKKKEEKKAAPAEEEMDECEA. The region spanning 281 to 442 is the EF-1-gamma C-terminal domain; it reads AKDPFAHLPK…KPFNQGKIFK (162 aa).

As to quaternary structure, EF-1 is composed of four subunits: alpha, beta, delta, and gamma.

Its function is as follows. Probably plays a role in anchoring the complex to other cellular components. This chain is Elongation factor 1-gamma (eef1g), found in Danio rerio (Zebrafish).